The chain runs to 253 residues: Small ribosomal subunit protein uS2 (253 aa).

The disordered stretch occupies residues Gln226 to Glu253. Residues Glu239–Glu253 show a composition bias toward acidic residues.

It belongs to the universal ribosomal protein uS2 family.

This Lactobacillus delbrueckii subsp. bulgaricus (strain ATCC 11842 / DSM 20081 / BCRC 10696 / JCM 1002 / NBRC 13953 / NCIMB 11778 / NCTC 12712 / WDCM 00102 / Lb 14) protein is Small ribosomal subunit protein uS2.